Reading from the N-terminus, the 443-residue chain is Protein IQ-DOMAIN 11 (443 aa).

Positions 5-20 (KGLFTVLKRIFISEVN) are calmodulin-binding. Short sequence motifs (nuclear localization signal) lie at residues 11-18 (LKRIFISE) and 27-34 (RRKWTFWK). A disordered region spans residues 44–65 (ITAPPEHRTSHESHEEQKEEIV). The span at 48–64 (PEHRTSHESHEEQKEEI) shows a compositional bias: basic and acidic residues. IQ domains lie at 113 to 138 (AATR…GIVK) and 139 to 161 (LQAY…CLQS). The segment covering 277–293 (FSSKTKPKDETLNEKQL) has biased composition (basic and acidic residues). Positions 277-361 (FSSKTKPKDE…PRSFDTQSES (85 aa)) are disordered.

The protein belongs to the IQD family. In terms of assembly, binds to multiple calmodulin (CaM) in the presence of Ca(2+) and CaM-like proteins. In terms of tissue distribution, expressed in hypocotyls, cotyledons, leaves and petioles.

It localises to the nucleus. It is found in the cytoplasm. The protein localises to the cytoskeleton. May be involved in cooperative interactions with calmodulins or calmodulin-like proteins. Recruits calmodulin proteins to microtubules, thus being a potential scaffold in cellular signaling and trafficking. Regulates cell shape and elongation in aerial organs (i.e. epidermis pavement cells) probably by regulating cortical microtubules (MT) arrays orientation. May associate with nucleic acids and regulate gene expression at the transcriptional or post-transcriptional level. In Arabidopsis thaliana (Mouse-ear cress), this protein is Protein IQ-DOMAIN 11.